Reading from the N-terminus, the 96-residue chain is Small ribosomal subunit protein bS6c (96 aa).

This sequence belongs to the bacterial ribosomal protein bS6 family.

Its subcellular location is the plastid. It localises to the chloroplast. Its function is as follows. Binds together with bS18 to 16S ribosomal RNA. In Guillardia theta (Cryptophyte), this protein is Small ribosomal subunit protein bS6c (rps6).